Reading from the N-terminus, the 27-residue chain is Alpha-benincasin (27 aa).

In terms of biological role, has weak antifungal activity toward C.comatus and P.piricola but not toward M.arachidicola. Inhibits cell-free translation in rabbit reticulocyte lysate system. This chain is Alpha-benincasin, found in Benincasa hispida (Wax gourd).